We begin with the raw amino-acid sequence, 737 residues long: Oligopeptide transporter 3 (737 aa).

Transmembrane regions (helical) follow at residues 45–65 (AWFL…FFTY), 69–89 (PLTI…KFMA), 117–137 (VIIT…AYSI), 153–173 (FICG…WAGI), 215–235 (FLVA…LFPI), 255–275 (VGSG…AGIS), 289–309 (ILNV…VCYW), 357–377 (LYLS…FTAT), 418–438 (WWFY…SFVW), 446–466 (WWGM…IGVI), 478–498 (IIGQ…NLIF), 532–552 (AQLV…WWML), 604–624 (VWLF…SKIF), 629–649 (WIPL…PPAT), 650–670 (PTNI…VFNY), and 681–701 (VLSA…FFAL).

This sequence belongs to the oligopeptide OPT transporter (TC 2.A.67.1) family. In terms of tissue distribution, strong expression in flowers, leaves and roots. Preferentially expressed in the vascular tissues of seedlings and mature plants as well as in pollen and developing embryos.

It localises to the membrane. May be involved in the translocation of tetra- and pentapeptides across the cellular membrane in an energy-dependent manner. Also acts as a metal transporter that could be a component of the copper transport machinery. Essential for early embryo development. In Arabidopsis thaliana (Mouse-ear cress), this protein is Oligopeptide transporter 3 (OPT3).